The primary structure comprises 1744 residues: Probable disease resistance protein At4g19520 (1744 aa).

Residues 3-163 (DGKEVYISFN…KIVADVRQKL (161 aa)) form the TIR 1 domain. Residue Glu80 is part of the active site. An NB-ARC domain is found at 192–411 (SLGIWGMAGI…VSEKEIFLDI (220 aa)). LRR repeat units follow at residues 503 to 526 (YEDV…AFQH), 557 to 581 (PPEL…GFQY), 583 to 602 (VELN…TKNL), 603 to 626 (EVLK…QYSP), 648 to 669 (LQHL…PKVP), 670 to 692 (PSIR…NHSS), 710 to 733 (DHRK…IVIF), 734 to 754 (ESLE…QGFP), 755 to 777 (QNLK…LCHH), 779 to 802 (SKLV…MSNM), 804 to 823 (YLAV…KELP), 824 to 846 (RNLK…LLET), 848 to 871 (SEVV…MSKL), 892 to 915 (PLNL…IGDL), 917 to 939 (LLDT…MHNL), 941 to 963 (PLKV…LPKV), 987 to 1010 (YEHR…IRWM), 1011 to 1035 (PSLK…DFSK), 1037 to 1059 (LSLR…SLQL), and 1062 to 1086 (AHGC…TFSN). Residues 1399-1559 (RNNDVFVSFH…KVANDIRKKL (161 aa)) form the TIR 2 domain.

Belongs to the disease resistance TIR-NB-LRR family.

It catalyses the reaction NAD(+) + H2O = ADP-D-ribose + nicotinamide + H(+). Functionally, probable disease resistance protein. The polypeptide is Probable disease resistance protein At4g19520 (Arabidopsis thaliana (Mouse-ear cress)).